A 298-amino-acid polypeptide reads, in one-letter code: GTPase Era (298 aa).

In terms of domain architecture, Era-type G spans 8-176 (RCGRIAVIGR…VSDLLALLPE (169 aa)). A G1 region spans residues 16–23 (GRPNVGKS). 16-23 (GRPNVGKS) contacts GTP. The tract at residues 42 to 46 (QTTRH) is G2. The tract at residues 63 to 66 (DTPG) is G3. GTP-binding positions include 63-67 (DTPGL) and 125-128 (NKID). The G4 stretch occupies residues 125 to 128 (NKID). The tract at residues 155–157 (VSA) is G5. Positions 199-283 (VREQVMRQLG…FLETWVRVRK (85 aa)) constitute a KH type-2 domain.

Belongs to the TRAFAC class TrmE-Era-EngA-EngB-Septin-like GTPase superfamily. Era GTPase family. Monomer.

It localises to the cytoplasm. The protein resides in the cell inner membrane. In terms of biological role, an essential GTPase that binds both GDP and GTP, with rapid nucleotide exchange. Plays a role in 16S rRNA processing and 30S ribosomal subunit biogenesis and possibly also in cell cycle regulation and energy metabolism. This is GTPase Era from Xylella fastidiosa (strain M12).